The primary structure comprises 615 residues: (+)-alpha-pinene synthase TPS2, chloroplastic (615 aa).

The transit peptide at 1–55 (MHCMAVRHFAPSSSLSIFSSTNINNHFFGREIFTPKTSNITTKKSRSRPNCNPIQ) directs the protein to the chloroplast. (2E)-geranyl diphosphate contacts are provided by Arg330, Asp367, Asp371, Arg509, and Asp512. Positions 367 and 371 each coordinate Mg(2+). Residues 367–371 (DDIYD) carry the DDXXD motif motif. Mg(2+) contacts are provided by Asp512, Thr516, and Glu520.

Belongs to the terpene synthase family. Tpsb subfamily. Requires Mg(2+) as cofactor. Mn(2+) is required as a cofactor. It depends on K(+) as a cofactor. As to expression, trichome.

The protein resides in the plastid. The protein localises to the chloroplast. The catalysed reaction is (2E)-geranyl diphosphate = (1R,5R)-alpha-pinene + diphosphate. The enzyme catalyses (2E)-geranyl diphosphate = (1R,5R)-beta-pinene + diphosphate. It carries out the reaction (2E)-geranyl diphosphate = (4S)-limonene + diphosphate. It catalyses the reaction (2E)-geranyl diphosphate = beta-myrcene + diphosphate. Its pathway is secondary metabolite biosynthesis; terpenoid biosynthesis. It participates in terpene metabolism; (-)-alpha-pinene biosynthesis; (-)-alpha-pinene from geranyl diphosphate: step 1/1. Its function is as follows. Involved in monoterpene (C10) olefins biosynthesis, constituants of cannabinoids and terpenoids-rich resins. Catalyzes mainly the conversion of (2E)-geranyl diphosphate to (+)-alpha-pinene, and also produces minor products such as (-)-limonene, (+)-beta-pinene and beta-myrcene. In Cannabis sativa (Hemp), this protein is (+)-alpha-pinene synthase TPS2, chloroplastic.